The primary structure comprises 404 residues: S-adenosylmethionine synthase (404 aa).

H17 provides a ligand contact to ATP. A Mg(2+)-binding site is contributed by D19. E45 contacts K(+). Residues E58 and Q101 each contribute to the L-methionine site. Positions 101–111 (QSADINRGVDR) are flexible loop. ATP is bound by residues 172 to 174 (DAK), 245 to 246 (RF), D254, 260 to 261 (RK), A277, and K281. D254 is a binding site for L-methionine. K285 is a binding site for L-methionine.

This sequence belongs to the AdoMet synthase family. In terms of assembly, homotetramer; dimer of dimers. Mg(2+) is required as a cofactor. K(+) serves as cofactor.

It is found in the cytoplasm. It carries out the reaction L-methionine + ATP + H2O = S-adenosyl-L-methionine + phosphate + diphosphate. The protein operates within amino-acid biosynthesis; S-adenosyl-L-methionine biosynthesis; S-adenosyl-L-methionine from L-methionine: step 1/1. Catalyzes the formation of S-adenosylmethionine (AdoMet) from methionine and ATP. The overall synthetic reaction is composed of two sequential steps, AdoMet formation and the subsequent tripolyphosphate hydrolysis which occurs prior to release of AdoMet from the enzyme. The chain is S-adenosylmethionine synthase from Chlorobium luteolum (strain DSM 273 / BCRC 81028 / 2530) (Pelodictyon luteolum).